The following is an 87-amino-acid chain: Small ribosomal subunit protein bS20 (87 aa).

Residues 1–15 (MANTRSAKKMVRKIA) are compositionally biased toward basic residues. Disordered stretches follow at residues 1–22 (MANT…DVNK) and 64–87 (KGVT…KAMA).

Belongs to the bacterial ribosomal protein bS20 family.

Its function is as follows. Binds directly to 16S ribosomal RNA. The protein is Small ribosomal subunit protein bS20 of Hyphomonas neptunium (strain ATCC 15444).